The following is a 791-amino-acid chain: Solute carrier family 26 member 9 (791 aa).

Residues 1–70 (MSQPRPRYVV…WLPKYKIKDY (70 aa)) are Cytoplasmic-facing. The chain crosses the membrane as a helical span at residues 71 to 96 (IIPDLLGGLSGGSIQVPQGMAFALLA). The Extracellular segment spans residues 97–99 (NLP). A helical transmembrane segment spans residues 100-117 (AVNGLYSSFFPLLTYFFL). The Cytoplasmic segment spans residues 118 to 128 (GGVHQMVPGTF). The chain crosses the membrane as a helical span at residues 129-142 (AVISILVGNICLQL). Residues 143 to 171 (APESKFQVFNNATNESYVDTAAMEAERLH) are Extracellular-facing. A helical membrane pass occupies residues 172-190 (VSATLACLTAIIQMGLGFM). Over 191 to 202 (QFGFVAIYLSES) the chain is Cytoplasmic. The chain crosses the membrane as a helical span at residues 203 to 224 (FIRGFMTAAGLQILISVLKYIF). The Extracellular portion of the chain corresponds to 225 to 235 (GLTIPSYTGPG). The helical intramembrane region spans 236-244 (SIVFTFIDI). At 245-254 (CKNLPHTNIA) the chain is on the extracellular side. The chain crosses the membrane as a helical span at residues 255-273 (SLIFALISGAFLVLVKELN). Over 274 to 281 (ARYMHKIR) the chain is Cytoplasmic. A helical transmembrane segment spans residues 282-297 (FPIPTEMIVVVVATAI). The Extracellular portion of the chain corresponds to 298–327 (SGGCKMPKKYHMQIVGEIQRGFPTPVSPVV). A helical transmembrane segment spans residues 328 to 348 (SQWKDMIGTAFSLAIVSYVIN). The Cytoplasmic portion of the chain corresponds to 349-366 (LAMGRTLANKHGYDVDSN). A helical transmembrane segment spans residues 367-382 (QEMIALGCSNFFGSFF). Residues 383–390 (KIHVICCA) are Extracellular-facing. A helical membrane pass occupies residues 391-400 (LSVTLAVDGA). Residues 401–404 (GGKS) lie on the Cytoplasmic side of the membrane. Residues 405 to 423 (QVASLCVSLVVMITMLVLG) form a helical membrane-spanning segment. Topologically, residues 424-428 (IYLYP) are extracellular. The helical transmembrane segment at 429–450 (LPKSVLGALIAVNLKNSLKQLT) threads the bilayer. At 451 to 464 (DPYYLWRKSKLDCC) the chain is on the cytoplasmic side. Residues 465 to 476 (IWVVSFLSSFFL) form a helical membrane-spanning segment. Residue Ser-477 is a topological domain, extracellular. Residues 478-489 (LPYGVAVGVAFS) traverse the membrane as a helical segment. Residues 490–791 (VLVVVFQTQF…MFHAETLTAL (302 aa)) are Cytoplasmic-facing. The STAS domain maps to 519–737 (TYNRAQDIQG…PSIHDAVLFA (219 aa)). The disordered stretch occupies residues 602–650 (FENAPPTDPNNNQTPANGTSVSYITFSPDSSSPAQSEPPASAEAPGEPS). Residues 610–626 (PNNNQTPANGTSVSYIT) are compositionally biased toward polar residues. Low complexity predominate over residues 628–650 (SPDSSSPAQSEPPASAEAPGEPS).

It belongs to the SLC26A/SulP transporter (TC 2.A.53) family. In terms of assembly, homodimer. In terms of tissue distribution, predominantly expressed in lung at the luminal side of the bronchiolar and alveolar epithelium of lung. To a lower extent, also expressed in pancreas and prostate.

The protein resides in the cell membrane. Its subcellular location is the endomembrane system. The catalysed reaction is chloride(in) = chloride(out). It carries out the reaction hydrogencarbonate(in) + chloride(out) = hydrogencarbonate(out) + chloride(in). Its activity is regulated as follows. Inhibited by ammonium and thiosulfate. Functionally, ion transporter that can act both as an ion channel and anion exchanger. Mainly acts as a chloride channel, which mediate uncoupled chloride anion transport in an alternate-access mechanism where a saturable binding site is alternately exposed to either one or the other side of the membrane. Also acts as a DIDS- and thiosulfate- sensitive anion exchanger the exchange of chloride for bicarbonate ions across the cell membrane. The protein is Solute carrier family 26 member 9 of Homo sapiens (Human).